The primary structure comprises 249 residues: Eukaryotic translation initiation factor 3 subunit K (249 aa).

The region spanning 46-222 (FDCYANLALL…VKVPSNKENE (177 aa)) is the PCI domain.

The protein belongs to the eIF-3 subunit K family. Component of the eukaryotic translation initiation factor 3 (eIF-3) complex.

The protein localises to the cytoplasm. Its function is as follows. Component of the eukaryotic translation initiation factor 3 (eIF-3) complex, which is involved in protein synthesis of a specialized repertoire of mRNAs and, together with other initiation factors, stimulates binding of mRNA and methionyl-tRNAi to the 40S ribosome. The eIF-3 complex specifically targets and initiates translation of a subset of mRNAs involved in cell proliferation. The sequence is that of Eukaryotic translation initiation factor 3 subunit K from Aspergillus clavatus (strain ATCC 1007 / CBS 513.65 / DSM 816 / NCTC 3887 / NRRL 1 / QM 1276 / 107).